Consider the following 396-residue polypeptide: Phosphoglycerate kinase (396 aa).

Substrate is bound by residues 21–23, R36, 59–62, R119, and R156; these read DFN and HLGK. ATP contacts are provided by residues K206, E325, and 352–355; that span reads GGDS.

It belongs to the phosphoglycerate kinase family. In terms of assembly, monomer.

The protein resides in the cytoplasm. The enzyme catalyses (2R)-3-phosphoglycerate + ATP = (2R)-3-phospho-glyceroyl phosphate + ADP. The protein operates within carbohydrate degradation; glycolysis; pyruvate from D-glyceraldehyde 3-phosphate: step 2/5. The chain is Phosphoglycerate kinase from Staphylococcus epidermidis (strain ATCC 35984 / DSM 28319 / BCRC 17069 / CCUG 31568 / BM 3577 / RP62A).